The primary structure comprises 141 residues: Hemoglobin subunit alpha (141 aa).

A Globin domain is found at 1–141 (VLSAADKAHV…VSTVLTSKYR (141 aa)). A Phosphoserine modification is found at Ser-3. 2 positions are modified to N6-succinyllysine: Lys-7 and Lys-11. Lys-16 carries the N6-acetyllysine; alternate modification. Position 16 is an N6-succinyllysine; alternate (Lys-16). A Phosphotyrosine modification is found at Tyr-24. Position 35 is a phosphoserine (Ser-35). At Lys-40 the chain carries N6-succinyllysine. At Ser-49 the chain carries Phosphoserine. His-58 provides a ligand contact to O2. Heme b is bound at residue His-87. Phosphothreonine is present on Thr-108. Ser-124 is modified (phosphoserine). Thr-134 and Thr-137 each carry phosphothreonine. Position 138 is a phosphoserine (Ser-138).

It belongs to the globin family. In terms of assembly, heterotetramer of two alpha chains and two beta chains. In terms of tissue distribution, red blood cells.

Functionally, involved in oxygen transport from the lung to the various peripheral tissues. Hemopressin acts as an antagonist peptide of the cannabinoid receptor CNR1. Hemopressin-binding efficiently blocks cannabinoid receptor CNR1 and subsequent signaling. The sequence is that of Hemoglobin subunit alpha (HBA) from Bradypus tridactylus (Pale-throated three-toed sloth).